A 150-amino-acid chain; its full sequence is Large ribosomal subunit protein bL9 (150 aa).

It belongs to the bacterial ribosomal protein bL9 family.

In terms of biological role, binds to the 23S rRNA. The chain is Large ribosomal subunit protein bL9 from Stenotrophomonas maltophilia (strain R551-3).